The following is a 556-amino-acid chain: (S)-N-methylcanadine 1-hydroxylase CYP82Y1 (556 aa).

A helical membrane pass occupies residues 18-38 (TAVGTLILAFLLTLSPVIIYY). Cysteine 500 contacts heme.

The protein belongs to the cytochrome P450 family. Heme is required as a cofactor. Highly expressed in capsules. Expressed is stems.

It localises to the membrane. It carries out the reaction (S)-cis-N-methylcanadine + reduced [NADPH--hemoprotein reductase] + O2 = (S)-1-hydroxy-N-methylcanadine + oxidized [NADPH--hemoprotein reductase] + H2O + H(+). The protein operates within alkaloid biosynthesis. Its function is as follows. Cytochrome P450 involved in the biosynthesis of the benzylisoquinoline alkaloid noscapine. Converts (S)-N-methylcanadine to (S)-1-hydroxy-N-methylcanadine. In Papaver somniferum (Opium poppy), this protein is (S)-N-methylcanadine 1-hydroxylase CYP82Y1.